Here is a 235-residue protein sequence, read N- to C-terminus: RNA pyrophosphohydrolase (235 aa).

The region spanning glycine 6–serine 149 is the Nudix hydrolase domain. The Nudix box motif lies at glycine 38 to glycine 59. The interval alanine 161–serine 235 is disordered. A compositionally biased stretch (basic and acidic residues) spans glutamine 171–glutamine 196. Residues threonine 203–threonine 220 show a composition bias toward low complexity.

The protein belongs to the Nudix hydrolase family. RppH subfamily. Requires a divalent metal cation as cofactor.

In terms of biological role, accelerates the degradation of transcripts by removing pyrophosphate from the 5'-end of triphosphorylated RNA, leading to a more labile monophosphorylated state that can stimulate subsequent ribonuclease cleavage. In Ralstonia pickettii (strain 12J), this protein is RNA pyrophosphohydrolase.